Here is a 245-residue protein sequence, read N- to C-terminus: Aquaporin SIP1-1 (245 aa).

2 consecutive transmembrane segments (helical) span residues 14-34 (AVVTFLWVLCASALGASTAAV) and 55-75 (LLSVLLFTFDLLCGALGGASF). The short motif at 76-78 (NPT) is the NPA 1 element. A run of 3 helical transmembrane segments spans residues 100–120 (FPAQAAGAVGGALAISELMPA), 138–158 (GALAEGVLTFVITLTVLWVIV), and 164–184 (VILKTLLLSTSIVSVILAGAE). The short motif at 191–193 (NPA) is the NPA 2 element. Residues 213–233 (VYWICPFIGAMLAGWIFRVVF) form a helical membrane-spanning segment.

The protein belongs to the MIP/aquaporin (TC 1.A.8) family. SIP (TC 1.A.8.10) subfamily.

The protein resides in the membrane. Aquaporins facilitate the transport of water and small neutral solutes across cell membranes. The sequence is that of Aquaporin SIP1-1 (SIP1-1) from Zea mays (Maize).